A 607-amino-acid polypeptide reads, in one-letter code: Glutamine--fructose-6-phosphate aminotransferase [isomerizing] (607 aa).

Cysteine 2 functions as the Nucleophile; for GATase activity in the catalytic mechanism. Positions 2-217 (CGIIGIIGND…DGDWAVLTRN (216 aa)) constitute a Glutamine amidotransferase type-2 domain. SIS domains lie at 283-422 (IGID…ARGA) and 455-597 (VCHD…VDQP). Lysine 602 acts as the For Fru-6P isomerization activity in catalysis.

As to quaternary structure, homodimer.

The protein resides in the cytoplasm. It carries out the reaction D-fructose 6-phosphate + L-glutamine = D-glucosamine 6-phosphate + L-glutamate. Its function is as follows. Catalyzes the first step in hexosamine metabolism, converting fructose-6P into glucosamine-6P using glutamine as a nitrogen source. This is Glutamine--fructose-6-phosphate aminotransferase [isomerizing] from Brucella melitensis biotype 1 (strain ATCC 23456 / CCUG 17765 / NCTC 10094 / 16M).